The sequence spans 135 residues: Basic phospholipase A2 KBf-VA (135 aa).

Cystine bridges form between cysteine 28/cysteine 87, cysteine 42/cysteine 134, cysteine 44/cysteine 60, cysteine 59/cysteine 115, cysteine 66/cysteine 108, cysteine 76/cysteine 101, and cysteine 94/cysteine 106. Tyrosine 43, glycine 45, and glycine 47 together coordinate Ca(2+). Residue histidine 63 is part of the active site. Aspartate 64 provides a ligand contact to Ca(2+). Aspartate 109 is an active-site residue.

It belongs to the phospholipase A2 family. Group I subfamily. D49 sub-subfamily. Ca(2+) is required as a cofactor. Expressed by the venom gland.

The protein resides in the secreted. The catalysed reaction is a 1,2-diacyl-sn-glycero-3-phosphocholine + H2O = a 1-acyl-sn-glycero-3-phosphocholine + a fatty acid + H(+). Functionally, snake venom phospholipase A2 (PLA2) that inhibits neuromuscular transmission by blocking acetylcholine release from the nerve termini. PLA2 catalyzes the calcium-dependent hydrolysis of the 2-acyl groups in 3-sn-phosphoglycerides. The chain is Basic phospholipase A2 KBf-VA from Bungarus fasciatus (Banded krait).